The primary structure comprises 358 residues: UPF0725 protein At4g29550 (358 aa).

Residues 31–82 (LNKHPPSGSGWTDEDDDNDDVFSSSFISKEELSDAVHNDPPSGWTDEDDDDQ) form a disordered region. The span at 58-67 (SKEELSDAVH) shows a compositional bias: basic and acidic residues.

This sequence belongs to the UPF0725 (EMB2204) family.

This Arabidopsis thaliana (Mouse-ear cress) protein is UPF0725 protein At4g29550.